A 180-amino-acid chain; its full sequence is Large ribosomal subunit protein uL5 (180 aa).

Belongs to the universal ribosomal protein uL5 family. Part of the 50S ribosomal subunit; part of the 5S rRNA/L5/L18/L25 subcomplex. Contacts the 5S rRNA and the P site tRNA. Forms a bridge to the 30S subunit in the 70S ribosome.

In terms of biological role, this is one of the proteins that bind and probably mediate the attachment of the 5S RNA into the large ribosomal subunit, where it forms part of the central protuberance. In the 70S ribosome it contacts protein S13 of the 30S subunit (bridge B1b), connecting the 2 subunits; this bridge is implicated in subunit movement. Contacts the P site tRNA; the 5S rRNA and some of its associated proteins might help stabilize positioning of ribosome-bound tRNAs. This is Large ribosomal subunit protein uL5 from Heliobacterium modesticaldum (strain ATCC 51547 / Ice1).